The primary structure comprises 81 residues: MNPLISAASVIAAGLAVGLASIGPGVGQGTAAGQAVEGIARQPEAEGKIRGTLLLSLAFMEALSIYGLVVALALLFANPFV.

Transmembrane regions (helical) follow at residues 3–23 (PLIS…ASIG) and 57–77 (LAFM…LLFA).

The protein belongs to the ATPase C chain family. In terms of assembly, F-type ATPases have 2 components, F(1) - the catalytic core - and F(0) - the membrane proton channel. F(1) has five subunits: alpha(3), beta(3), gamma(1), delta(1), epsilon(1). F(0) has four main subunits: a(1), b(1), b'(1) and c(10-14). The alpha and beta chains form an alternating ring which encloses part of the gamma chain. F(1) is attached to F(0) by a central stalk formed by the gamma and epsilon chains, while a peripheral stalk is formed by the delta, b and b' chains.

It is found in the plastid. Its subcellular location is the chloroplast thylakoid membrane. F(1)F(0) ATP synthase produces ATP from ADP in the presence of a proton or sodium gradient. F-type ATPases consist of two structural domains, F(1) containing the extramembraneous catalytic core and F(0) containing the membrane proton channel, linked together by a central stalk and a peripheral stalk. During catalysis, ATP synthesis in the catalytic domain of F(1) is coupled via a rotary mechanism of the central stalk subunits to proton translocation. Functionally, key component of the F(0) channel; it plays a direct role in translocation across the membrane. A homomeric c-ring of between 10-14 subunits forms the central stalk rotor element with the F(1) delta and epsilon subunits. The polypeptide is ATP synthase subunit c, chloroplastic (Gossypium barbadense (Sea Island cotton)).